Here is a 224-residue protein sequence, read N- to C-terminus: MKATVKGRYEGDKATAAATLAFTPSAADLRFKASATDAAFARGPSLEGLILTLEKPGSFLLDLKPHSKDVRFQFMNSALLLDRRVSLTYTHSTTLSPGPAKLPARTALDGSLTFDPANKLSLSHTLGSSGCRVKYSYAHGQDRLTTIEPCFDTANNAWDFAVTRKFQGGDAIKATYQASTKLLALDWTRDSKIGASFKVAASFDLSDQSKAPKLIAESTWNYEI.

Met-1 is a topological domain (cytoplasmic). A beta stranded transmembrane segment spans residues 2–11 (KATVKGRYEG). At 12-16 (DKATA) the chain is on the chloroplast intermembrane side. The beta stranded transmembrane segment at 17–28 (AATLAFTPSAAD) threads the bilayer. The Cytoplasmic segment spans residues 29–32 (LRFK). A beta stranded membrane pass occupies residues 33 to 42 (ASATDAAFAR). At 43-55 (GPSLEGLILTLEK) the chain is on the chloroplast intermembrane side. Residues 56–64 (PGSFLLDLK) traverse the membrane as a beta stranded segment. The Cytoplasmic segment spans residues 65-70 (PHSKDV). A beta stranded membrane pass occupies residues 71-80 (RFQFMNSALL). The Chloroplast intermembrane segment spans residues 81-101 (LDRRVSLTYTHSTTLSPGPAK). The beta stranded transmembrane segment at 102-111 (LPARTALDGS) threads the bilayer. Residues 112–116 (LTFDP) lie on the Cytoplasmic side of the membrane. Residues 117–126 (ANKLSLSHTL) traverse the membrane as a beta stranded segment. Topologically, residues 127–130 (GSSG) are chloroplast intermembrane. Residues 131–140 (CRVKYSYAHG) traverse the membrane as a beta stranded segment. At 141 to 154 (QDRLTTIEPCFDTA) the chain is on the cytoplasmic side. Residues 155-166 (NNAWDFAVTRKF) traverse the membrane as a beta stranded segment. Residues 167 to 169 (QGG) lie on the Chloroplast intermembrane side of the membrane. The beta stranded transmembrane segment at 170 to 178 (DAIKATYQA) threads the bilayer. Over 179-180 (ST) the chain is Cytoplasmic. The beta stranded transmembrane segment at 181–189 (KLLALDWTR) threads the bilayer. Topologically, residues 190–212 (DSKIGASFKVAASFDLSDQSKAP) are chloroplast intermembrane. A beta stranded membrane pass occupies residues 213–222 (KLIAESTWNY). The Cytoplasmic segment spans residues 223-224 (EI).

The protein belongs to the plastid outer envelope porin OEP24 (TC 1.B.28.1) family. Homooligomers form large rather nonselective pores in plastidial outer membranes.

The protein localises to the plastid. Its subcellular location is the etioplast membrane. It is found in the chloroplast outer membrane. Its function is as follows. High-conductance voltage-dependent solute channel with a slight selectivity for cations transporting triosephosphates, dicarboxylic acids, ATP, inorganic phosphate (Pi), sugars, and positively or negatively charged amino acids. This Oryza sativa subsp. japonica (Rice) protein is Outer envelope pore protein 24, chloroplastic (OEP24).